Here is a 491-residue protein sequence, read N- to C-terminus: Argininosuccinate lyase (491 aa).

The protein belongs to the lyase 1 family. Argininosuccinate lyase subfamily.

It is found in the cytoplasm. It carries out the reaction 2-(N(omega)-L-arginino)succinate = fumarate + L-arginine. Its pathway is amino-acid biosynthesis; L-arginine biosynthesis; L-arginine from L-ornithine and carbamoyl phosphate: step 3/3. The polypeptide is Argininosuccinate lyase (Methanococcoides burtonii (strain DSM 6242 / NBRC 107633 / OCM 468 / ACE-M)).